Reading from the N-terminus, the 97-residue chain is Large ribosomal subunit protein uL23 (97 aa).

This sequence belongs to the universal ribosomal protein uL23 family. As to quaternary structure, part of the 50S ribosomal subunit. Contacts protein L29, and trigger factor when it is bound to the ribosome.

Functionally, one of the early assembly proteins it binds 23S rRNA. One of the proteins that surrounds the polypeptide exit tunnel on the outside of the ribosome. Forms the main docking site for trigger factor binding to the ribosome. The protein is Large ribosomal subunit protein uL23 of Anaeromyxobacter sp. (strain Fw109-5).